Consider the following 150-residue polypeptide: Protein E6 (150 aa).

Zinc fingers lie at residues 31-67 and 104-140; these read CVFCKNALTTAEIYSYAYKQLKVLFRGGYPYAACACC and CYLCHKPLCEVEKVKHILTKARFIKLNCTWKGRCLHC.

This sequence belongs to the papillomaviridae E6 protein family. As to quaternary structure, forms homodimers. Interacts with ubiquitin-protein ligase UBE3A/E6-AP; this interaction stimulates UBE3A ubiquitin activity. Interacts with host TP53 and EP300; this interaction inhibits TP53 activity. Interacts with human ZYX.

The protein resides in the host cytoplasm. It localises to the host nucleus. Functionally, plays a major role in the induction and maintenance of cellular transformation. E6 associates with host UBE3A/E6-AP ubiquitin-protein ligase and modulates its activity. Sequesters tumor suppressor TP53 in the host cytoplasm and modulates its activity by interacting with host EP300 that results in the reduction of TP53 acetylation and activation. In turn, apoptosis induced by DNA damage is inhibited. E6 also protects host keratinocytes from apoptosis by mediating the degradation of host BAK1. May also inhibit host immune response. The chain is Protein E6 from Human papillomavirus type 6a.